Consider the following 716-residue polypeptide: MSVDSLVSCLEQLITDDLKLVEHQEVSNGATWASALQSTKDVPSHALTKTIVLKPKTAKSQTVVPIILAALETTSTPSGIAAKAVGSKEARMAAADLVEEVFGIPPTDVGIFSVNKENASKVHVVLDAALIQHNGLLAFHPSSSAKTVFVSPAAVQTYLKSVGVNPIIVDFSAPGSATAPSKPAAQKKKAEPSKNDAAIENAALIGITVRKDADFPNWYQQVLTKSDMIEYYDISGCYILKPWSYSIWEAIQGWFDKEIKKLGVRNGYFPLFVSSKVLEKEKDHVEGFAPEVAWVTRAGTSELDEPIAIRPTSETVMYPYYAKWIRSHRDLPLKLNQWNSVVRWEFKNPQPFLRTREFLWQEGHTAHMTLEGATEEVHQILDLYARIYTDLLAVPVIKGVKSENEKFAGGMFTTTVEGYIPTTGRGIQGATSHCLGQNFSKMFNIVVEDPNAEIGPTGERPKLFVWQNSWGLSTRTIGVAVMVHGDDKGLKLPPAIALVQSVVVPCGITNKTTDQERNEIEGFCSKLADRLNAADIRTEADLRAYTPGYKFSHWEMKGVPLRLEYGPNDAKKNQVTAVRRDTFEKIPVPLNNLEKGVSDLLAKIQTNMYETAKAERDAHVVKVKEWADFVPALNKKNIVMIPWCNTTECEKEIKKNSARQVNGDEPEDEKAPSMGAKSLCIPLEQPSGEDAIIEGTTKCAGCGNLAKVWGLFGRSY.

Residues 655–675 (KNSARQVNGDEPEDEKAPSMG) form a disordered region.

It belongs to the class-II aminoacyl-tRNA synthetase family.

It localises to the cytoplasm. It catalyses the reaction tRNA(Pro) + L-proline + ATP = L-prolyl-tRNA(Pro) + AMP + diphosphate. This is Putative proline--tRNA ligase C19C7.06 (prs1) from Schizosaccharomyces pombe (strain 972 / ATCC 24843) (Fission yeast).